The chain runs to 572 residues: Proline--tRNA ligase (572 aa).

Belongs to the class-II aminoacyl-tRNA synthetase family. ProS type 1 subfamily. As to quaternary structure, homodimer.

The protein localises to the cytoplasm. The enzyme catalyses tRNA(Pro) + L-proline + ATP = L-prolyl-tRNA(Pro) + AMP + diphosphate. Its function is as follows. Catalyzes the attachment of proline to tRNA(Pro) in a two-step reaction: proline is first activated by ATP to form Pro-AMP and then transferred to the acceptor end of tRNA(Pro). As ProRS can inadvertently accommodate and process non-cognate amino acids such as alanine and cysteine, to avoid such errors it has two additional distinct editing activities against alanine. One activity is designated as 'pretransfer' editing and involves the tRNA(Pro)-independent hydrolysis of activated Ala-AMP. The other activity is designated 'posttransfer' editing and involves deacylation of mischarged Ala-tRNA(Pro). The misacylated Cys-tRNA(Pro) is not edited by ProRS. The protein is Proline--tRNA ligase of Pectobacterium atrosepticum (strain SCRI 1043 / ATCC BAA-672) (Erwinia carotovora subsp. atroseptica).